Reading from the N-terminus, the 128-residue chain is Fluoride-specific ion channel FluC (128 aa).

A run of 4 helical transmembrane segments spans residues 5 to 25 (ALVA…SMVI), 32 to 52 (TFPW…GLFA), 70 to 90 (FFMV…LQTL), and 106 to 126 (VGSV…ATII). Glycine 77 and threonine 80 together coordinate Na(+).

The protein belongs to the fluoride channel Fluc/FEX (TC 1.A.43) family.

Its subcellular location is the cell inner membrane. It catalyses the reaction fluoride(in) = fluoride(out). Na(+) is not transported, but it plays an essential structural role and its presence is essential for fluoride channel function. Functionally, fluoride-specific ion channel. Important for reducing fluoride concentration in the cell, thus reducing its toxicity. The polypeptide is Fluoride-specific ion channel FluC (Paramagnetospirillum magneticum (strain ATCC 700264 / AMB-1) (Magnetospirillum magneticum)).